The primary structure comprises 344 residues: UDP-3-O-acylglucosamine N-acyltransferase (344 aa).

The active-site Proton acceptor is the His-248.

Belongs to the transferase hexapeptide repeat family. LpxD subfamily. As to quaternary structure, homotrimer.

The enzyme catalyses a UDP-3-O-[(3R)-3-hydroxyacyl]-alpha-D-glucosamine + a (3R)-hydroxyacyl-[ACP] = a UDP-2-N,3-O-bis[(3R)-3-hydroxyacyl]-alpha-D-glucosamine + holo-[ACP] + H(+). It participates in bacterial outer membrane biogenesis; LPS lipid A biosynthesis. Its function is as follows. Catalyzes the N-acylation of UDP-3-O-acylglucosamine using 3-hydroxyacyl-ACP as the acyl donor. Is involved in the biosynthesis of lipid A, a phosphorylated glycolipid that anchors the lipopolysaccharide to the outer membrane of the cell. The polypeptide is UDP-3-O-acylglucosamine N-acyltransferase (Prochlorococcus marinus (strain MIT 9515)).